Consider the following 241-residue polypeptide: ATP synthase subunit a (241 aa).

Transmembrane regions (helical) follow at residues 29-49 (NSSL…LLGV), 86-106 (IPLV…GMLP), 114-134 (HVIV…IVGF), 144-164 (ILLP…IKLF), 177-197 (LAAN…FIMN), 200-220 (LILT…EVFV), and 221-241 (AILQ…DAVK).

This sequence belongs to the ATPase A chain family. In terms of assembly, F-type ATPases have 2 components, CF(1) - the catalytic core - and CF(0) - the membrane proton channel. CF(1) has five subunits: alpha(3), beta(3), gamma(1), delta(1), epsilon(1). CF(0) has three main subunits: a(1), b(2) and c(9-12). The alpha and beta chains form an alternating ring which encloses part of the gamma chain. CF(1) is attached to CF(0) by a central stalk formed by the gamma and epsilon chains, while a peripheral stalk is formed by the delta and b chains.

It is found in the cell membrane. Its function is as follows. Key component of the proton channel; it plays a direct role in the translocation of protons across the membrane. This is ATP synthase subunit a from Wolbachia sp. subsp. Brugia malayi (strain TRS).